The following is a 296-amino-acid chain: LysM and putative peptidoglycan-binding domain-containing protein 4 (296 aa).

The Extracellular segment spans residues 1 to 217 (MRHKELLSKT…PMDGADCGIQ (217 aa)). A glycan (N-linked (GlcNAc...) asparagine) is linked at Asn30. In terms of domain architecture, LysM spans 74–118 (LQRELAQEDSLNKLALQYGCKVADIKKVNNFIREQDLYALKSIKS). Residues 218–238 (WWNAVFIMLLIGIVLPIFYLV) traverse the membrane as a helical segment. The Cytoplasmic portion of the chain corresponds to 239–296 (YFKIQASGETPNSLNTAAIPNGSMAMGTVPGQAPRLAVAVPTVPSADSQFSQTTQAGN).

Its subcellular location is the membrane. This is LysM and putative peptidoglycan-binding domain-containing protein 4 (LYSMD4) from Pongo abelii (Sumatran orangutan).